A 203-amino-acid polypeptide reads, in one-letter code: Large ribosomal subunit protein bL25 (203 aa).

Belongs to the bacterial ribosomal protein bL25 family. CTC subfamily. As to quaternary structure, part of the 50S ribosomal subunit; part of the 5S rRNA/L5/L18/L25 subcomplex. Contacts the 5S rRNA. Binds to the 5S rRNA independently of L5 and L18.

In terms of biological role, this is one of the proteins that binds to the 5S RNA in the ribosome where it forms part of the central protuberance. The chain is Large ribosomal subunit protein bL25 from Xanthobacter autotrophicus (strain ATCC BAA-1158 / Py2).